Here is a 557-residue protein sequence, read N- to C-terminus: Formate--tetrahydrofolate ligase (557 aa).

Threonine 67–threonine 74 serves as a coordination point for ATP.

Belongs to the formate--tetrahydrofolate ligase family.

The catalysed reaction is (6S)-5,6,7,8-tetrahydrofolate + formate + ATP = (6R)-10-formyltetrahydrofolate + ADP + phosphate. It participates in one-carbon metabolism; tetrahydrofolate interconversion. The chain is Formate--tetrahydrofolate ligase from Cereibacter sphaeroides (strain ATCC 17029 / ATH 2.4.9) (Rhodobacter sphaeroides).